The following is a 435-amino-acid chain: RuBisCO large subunit-binding protein subunit beta-1 (435 aa).

It belongs to the chaperonin (HSP60) family. As to quaternary structure, oligomer of probably six alpha and six beta subunits.

The protein resides in the plastid. It localises to the chloroplast. In terms of biological role, this protein binds RuBisCO small and large subunits and is implicated in the assembly of the enzyme oligomer. The chain is RuBisCO large subunit-binding protein subunit beta-1 from Chlamydomonas reinhardtii (Chlamydomonas smithii).